The primary structure comprises 465 residues: Argininosuccinate lyase (465 aa).

It belongs to the lyase 1 family. Argininosuccinate lyase subfamily.

It localises to the cytoplasm. The enzyme catalyses 2-(N(omega)-L-arginino)succinate = fumarate + L-arginine. It participates in amino-acid biosynthesis; L-arginine biosynthesis; L-arginine from L-ornithine and carbamoyl phosphate: step 3/3. The sequence is that of Argininosuccinate lyase from Hyphomonas neptunium (strain ATCC 15444).